The sequence spans 952 residues: Protein translocase subunit SecA (952 aa).

ATP contacts are provided by residues Gln135, 153–157 (GEGKT), and Asp575. Residues 907–921 (AAPAAAIPGVSAKAA) show a composition bias toward low complexity. Positions 907–946 (AAPAAAIPGVSAKAATQSTTPAAKEIGRNDPCPCGSGKKY) are disordered. Cys938, Cys940, Cys949, and Cys950 together coordinate Zn(2+).

This sequence belongs to the SecA family. As to quaternary structure, monomer and homodimer. Part of the essential Sec protein translocation apparatus which comprises SecA, SecYEG and auxiliary proteins SecDF. Other proteins may also be involved. Zn(2+) serves as cofactor.

Its subcellular location is the cell membrane. The protein resides in the cytoplasm. It carries out the reaction ATP + H2O + cellular proteinSide 1 = ADP + phosphate + cellular proteinSide 2.. Functionally, part of the Sec protein translocase complex. Interacts with the SecYEG preprotein conducting channel. Has a central role in coupling the hydrolysis of ATP to the transfer of proteins into and across the cell membrane, serving as an ATP-driven molecular motor driving the stepwise translocation of polypeptide chains across the membrane. The sequence is that of Protein translocase subunit SecA from Dehalococcoides mccartyi (strain CBDB1).